The chain runs to 188 residues: MMRRVYSPVFCSVAAARFAATSAAKKYDLFGYEVDTNTAPWIEKIKKCKYYDEAGEVLVNMNVSNCPPDIATYNATLQCIYQSPSKQSTPVDNESKFCAMMDLLEEMQHRNRLKPNEESWTWVMKECVKSGQFRLGYCIQQVMETECKGCPADLVKANEANAQKAKTEGKEHPGHLSQQAGLFDVKVE.

The N-terminal 18 residues, 1-18 (MMRRVYSPVFCSVAAARF), are a transit peptide targeting the mitochondrion. 3 PPR repeats span residues 36–70 (TNTA…PPDI), 75–109 (ATLQ…EMQH), and 116–146 (NEES…METE).

As to quaternary structure, F-type ATPases have 2 components, F(1) - the catalytic core - and F(o) - the membrane proton channel. F(1) has five subunits: alpha(3), beta(3), gamma(1), delta(1), epsilon(1), plus the additional subunit P18 (Tb427.05.1710) that is not present in F(1)F(o) ATP synthase from metazoa. Subunit P18 (Tb927.5.1710) interacts with the alpha subunit with a 1:1 stoichiometry; the interaction is direct. Subunit gamma is part of the central stalk. F(o) has three main subunits: a, b and c. The trypanosomal ATPase complex contains additional subunits that are not present in the F(1)F(o) ATP synthase from metazoa.

The protein localises to the mitochondrion. The protein resides in the mitochondrion inner membrane. Mitochondrial membrane ATP synthase (F(1)F(o) ATP synthase) produces ATP from ADP in the presence of a proton gradient across the membrane which is generated by electron transport complexes of the respiratory chain. F-type ATPases consist of two structural domains, F(1) - containing the extramembraneous catalytic core, and F(o) - containing the membrane proton channel, linked together by a central stalk and a peripheral stalk. During catalysis, ATP synthesis in the catalytic domain of F(1) is coupled via a rotary mechanism of the central stalk subunits to proton translocation. Subunits alpha and beta form the catalytic core in F(1). Rotation of the central stalk against the surrounding alpha(3)beta(3) subunits leads to hydrolysis of ATP in three separate catalytic sites on the beta subunits. Contrary to the procyclic, insect form that requires F(1)F(o) ATP synthase for ATP synthesis, the bloodstream form relies on ATP hydrolysis by F(1)F(o) ATP synthase to maintain its mitochondrial membrane potential. The protein is ATP synthase subunit p18, mitochondrial of Trypanosoma brucei brucei.